Reading from the N-terminus, the 338-residue chain is UPF0252 protein PF1496 (338 aa).

Residues 100–120 (ILSMLFLVFILFPAFTSHIWS) form a helical membrane-spanning segment.

It belongs to the UPF0252 family.

The protein localises to the membrane. This Pyrococcus furiosus (strain ATCC 43587 / DSM 3638 / JCM 8422 / Vc1) protein is UPF0252 protein PF1496.